Here is a 718-residue protein sequence, read N- to C-terminus: Mitotic spindle assembly checkpoint protein MAD1 (718 aa).

At M1 the chain carries N-acetylmethionine. S16 is subject to Phosphoserine. A coiled-coil region spans residues 46–632 (QQSMQLEERA…QTKIQEFRKA (587 aa)). At K61 the chain carries N6-acetyllysine; alternate. K61 is covalently cross-linked (Glycyl lysine isopeptide (Lys-Gly) (interchain with G-Cter in SUMO2); alternate). Residues 79–82 (KRAR) carry the Nuclear localization signal motif. S214 bears the Phosphoserine mark. The tract at residues 301–340 (VGLELENERLLAKLQSWERLDQTMGLSIRTPEDLSRFVVE) is important for interaction with IK. A necessary for interaction with NEK2 region spans residues 380–532 (LLEERKKRET…EAQLERRALQ (153 aa)). S428 is modified (phosphoserine). Residues 439–480 (EDMVQKVHSHSAEMEAQLSQALEELGGQKQRADMLEMELKML) are important for interaction with IK. Positions 540-551 (TKVLHMSLNPTS) are necessary for interaction with MAD2L1. S598 and S610 each carry phosphoserine. Y634 bears the Phosphotyrosine mark. T716 is modified (phosphothreonine).

It belongs to the MAD1 family. Homodimer. Dimerizes via its N- and C- terminal regions. Heterodimerizes with MAD2L1 in order to form a tetrameric MAD1L1-MAD2L1 core complex. Interacts with the closed conformation form of MAD2L1 (C-MAD2) and open conformation form of MAD2L1 (O-MAD2). It is unclear whether MAD1L1 dimerization promotes the conversion of closed to open conformation of MAD2L1. Formation of a heterotetrameric core complex containing two molecules each of MAD1L1 and of MAD2L1 promotes binding of another molecule of MAD2L1 to each MAD2L1, resulting in a heterohexamer. Perturbation of the original MAD1L1-MAD2L1 structure by the spindle checkpoint may decrease MAD2L1 affinity for MAD1L1. CDC20 can compete with MAD1L1 for MAD2L1 binding, until the attachment and/or tension dampen the checkpoint signal, preventing further release of MAD2L1 on to CDC20. Also able to interact with the BUB1/BUB3 complex. Interacts with NEK2. Interacts with TTK. Interacts with TPR; the interactions occurs in a microtubule-independent manner. Interacts with IK. Interacts with the viral Tax protein. Interacts with PRAP1. As to quaternary structure, interacts with MAD2L1; this interaction leads to the cytoplasmic sequestration of MAD2L1. Interacts with PRAP1. In terms of processing, phosphorylated; by BUB1. Become hyperphosphorylated in late S through M phases or after mitotic spindle damage. Phosphorylated; by TTK. As to expression, expressed in hepatocellular carcinomas and hepatoma cell lines (at protein level).

The protein localises to the nucleus. It is found in the chromosome. It localises to the centromere. The protein resides in the kinetochore. Its subcellular location is the nucleus envelope. The protein localises to the cytoplasm. It is found in the cytoskeleton. It localises to the microtubule organizing center. The protein resides in the centrosome. Its subcellular location is the spindle. The protein localises to the spindle pole. In terms of biological role, component of the spindle-assembly checkpoint that prevents the onset of anaphase until all chromosomes are properly aligned at the metaphase plate. Forms a heterotetrameric complex with the closed conformation form of MAD2L1 (C-MAD2) at unattached kinetochores during prometaphase, recruits an open conformation of MAD2L1 (O-MAD2) and promotes the conversion of O-MAD2 to C-MAD2, which ensures mitotic checkpoint signaling. Sequesters MAD2L1 in the cytoplasm preventing its function as an activator of the mitotic spindle assembly checkpoint (SAC) resulting in SAC impairment and chromosomal instability in hepatocellular carcinomas. This chain is Mitotic spindle assembly checkpoint protein MAD1 (MAD1L1), found in Homo sapiens (Human).